Consider the following 344-residue polypeptide: Succinylglutamate desuccinylase (344 aa).

Zn(2+) is bound by residues His-63, Glu-66, and His-160. The active site involves Glu-224.

The protein belongs to the AspA/AstE family. Succinylglutamate desuccinylase subfamily. Requires Zn(2+) as cofactor.

It carries out the reaction N-succinyl-L-glutamate + H2O = L-glutamate + succinate. Its pathway is amino-acid degradation; L-arginine degradation via AST pathway; L-glutamate and succinate from L-arginine: step 5/5. In terms of biological role, transforms N(2)-succinylglutamate into succinate and glutamate. This is Succinylglutamate desuccinylase from Shewanella baltica (strain OS223).